The primary structure comprises 331 residues: Tyrosine recombinase XerD (331 aa).

In terms of domain architecture, Core-binding (CB) spans 8-93; sequence GRDGARLESF…SMRQFYRFLY (86 aa). The region spanning 114 to 318 is the Tyr recombinase domain; sequence ALPKTMSVAD…LEERLQELVQ (205 aa). Residues Arg-161 and Lys-185 contribute to the active site. Residues 214–228 are compositionally biased toward basic and acidic residues; that stretch reads QEKSKAAASQKKTDT. The disordered stretch occupies residues 214–239; sequence QEKSKAAASQKKTDTAESPWLFPSNS. Active-site residues include His-270, Arg-273, and His-296. Residue Tyr-305 is the O-(3'-phospho-DNA)-tyrosine intermediate of the active site.

It belongs to the 'phage' integrase family. XerD subfamily. In terms of assembly, forms a cyclic heterotetrameric complex composed of two molecules of XerC and two molecules of XerD.

It is found in the cytoplasm. Its function is as follows. Site-specific tyrosine recombinase, which acts by catalyzing the cutting and rejoining of the recombining DNA molecules. The XerC-XerD complex is essential to convert dimers of the bacterial chromosome into monomers to permit their segregation at cell division. It also contributes to the segregational stability of plasmids. The sequence is that of Tyrosine recombinase XerD from Agrobacterium fabrum (strain C58 / ATCC 33970) (Agrobacterium tumefaciens (strain C58)).